Reading from the N-terminus, the 665-residue chain is UvrABC system protein B (665 aa).

One can recognise a Helicase ATP-binding domain in the interval 25 to 176; sequence NSIEKGNRFQ…NQRQLLRDLV (152 aa). 38–45 contacts ATP; sequence GATGTGKT. A Beta-hairpin motif is present at residues 91-114; it reads YYDYYQPEAYIPVSDTYIEKSASI. Residues 429–595 form the Helicase C-terminal domain; the sequence is QVDDLLGEIK…PIVTRSSNAI (167 aa). The UVR domain maps to 626 to 661; sequence PELIGQLEEQMKEAAKKLEFEEAAKYRDRIQHLRDK.

Belongs to the UvrB family. Forms a heterotetramer with UvrA during the search for lesions. Interacts with UvrC in an incision complex.

It is found in the cytoplasm. In terms of biological role, the UvrABC repair system catalyzes the recognition and processing of DNA lesions. A damage recognition complex composed of 2 UvrA and 2 UvrB subunits scans DNA for abnormalities. Upon binding of the UvrA(2)B(2) complex to a putative damaged site, the DNA wraps around one UvrB monomer. DNA wrap is dependent on ATP binding by UvrB and probably causes local melting of the DNA helix, facilitating insertion of UvrB beta-hairpin between the DNA strands. Then UvrB probes one DNA strand for the presence of a lesion. If a lesion is found the UvrA subunits dissociate and the UvrB-DNA preincision complex is formed. This complex is subsequently bound by UvrC and the second UvrB is released. If no lesion is found, the DNA wraps around the other UvrB subunit that will check the other stand for damage. This chain is UvrABC system protein B, found in Gloeothece citriformis (strain PCC 7424) (Cyanothece sp. (strain PCC 7424)).